Reading from the N-terminus, the 357-residue chain is DNA integrity scanning protein DisA (357 aa).

Residues 8 to 148 (PQELIEKIKL…NYKYVVNQVD (141 aa)) enclose the DAC domain. Residues Gly76, Leu94, Thr107, Thr111, and Arg128 each contribute to the 3',3'-c-di-AMP site.

Belongs to the DisA family. As to quaternary structure, homooctamer. Requires Mg(2+) as cofactor.

It carries out the reaction 2 ATP = 3',3'-c-di-AMP + 2 diphosphate. With respect to regulation, inhibited by 3'-dATP. Its function is as follows. Participates in a DNA-damage check-point. DisA forms globular foci that rapidly scan along the chromosomes searching for lesions. Has diadenylate cyclase activity, catalyzing the condensation of 2 ATP molecules into cyclic di-AMP (c-di-AMP). c-di-AMP likely acts as a signaling molecule that may couple DNA integrity with a cellular process. This rate-limiting step is the accessibility of the active site; mutating the possible exit tunnel (residues 128-130) increases product 2-fold despite Arg-130 being important for ATP-binding. Does not convert GTP to c-di-GMP. The protein is DNA integrity scanning protein DisA of Thermotoga maritima (strain ATCC 43589 / DSM 3109 / JCM 10099 / NBRC 100826 / MSB8).